Here is a 453-residue protein sequence, read N- to C-terminus: Cyclic GMP-AMP phosphodiesterase SMPDL3A (453 aa).

The signal sequence occupies residues 1–22 (MALVRALVCCLLTAWHCRSGLG). Positions 45 and 47 each coordinate Zn(2+). C62 and C81 form a disulfide bridge. Residue N69 is glycosylated (N-linked (GlcNAc...) asparagine). Position 110 (D110) interacts with Zn(2+). Residue H114 participates in ATP binding. N-linked (GlcNAc...) asparagine glycosylation is present at N131. N151 contributes to the Zn(2+) binding site. ATP contacts are provided by N151 and H152. N-linked (GlcNAc...) asparagine glycans are attached at residues N222 and N238. Position 252 (H252) interacts with Zn(2+). N263 is a glycosylation site (N-linked (GlcNAc...) asparagine). Positions 293 and 295 each coordinate Zn(2+). An N-linked (GlcNAc...) asparagine glycan is attached at N356. Cystine bridges form between C420-C424 and C430-C443. N437 carries an N-linked (GlcNAc...) asparagine glycan.

The protein belongs to the acid sphingomyelinase family. As to quaternary structure, monomer. Homodimer; homodimerizes following 2',3'-cGAMP-binding. Zn(2+) is required as a cofactor. N-glycosylation is required for protein maturation, secretion and phosphodiesterase activity. As to expression, detected in blood serum. Detected in macrophages (at protein level).

It is found in the secreted. It carries out the reaction 2',3'-cGAMP + H2O = 5'-pGpA(2'-5') + H(+). The enzyme catalyses 5'-pGpA(2'-5') + H2O = 5'-GpA(2'-5') + phosphate. The catalysed reaction is a ribonucleoside 5'-triphosphate + H2O = a ribonucleoside 5'-diphosphate + phosphate + H(+). It catalyses the reaction ATP + H2O = ADP + phosphate + H(+). Its activity is regulated as follows. Requires micromolar levels of Zn(2+) for activity. Inhibited by millimolar levels of Zn(2+). In terms of biological role, cyclic-nucleotide phosphodiesterase that acts as a negative regulator of innate immunity by mediating degradation of 2',3'-cGAMP, thereby inhibiting the cGAS-STING signaling. Specifically linearizes 2',3'-cGAMP into 2'5'-bond pGpA and further hydrolyzes pGpA to produce GpA. Also has in vitro nucleotide phosphodiesterase activity with nucleoside triphosphates, such as ATP. Has in vitro activity with p-nitrophenyl-TMP. Has lower activity with nucleoside diphosphates, and no activity with nucleoside monophosphates. Has in vitro activity with CDP-choline, giving rise to CMP and phosphocholine. Has in vitro activity with CDP-ethanolamine. Does not have sphingomyelin phosphodiesterase activity. In Homo sapiens (Human), this protein is Cyclic GMP-AMP phosphodiesterase SMPDL3A.